Consider the following 430-residue polypeptide: Enolase (430 aa).

Gln-163 is a (2R)-2-phosphoglycerate binding site. Glu-205 (proton donor) is an active-site residue. The Mg(2+) site is built by Asp-242, Glu-287, and Asp-314. (2R)-2-phosphoglycerate is bound by residues Lys-339, Arg-368, Ser-369, and Lys-390. Lys-339 (proton acceptor) is an active-site residue.

It belongs to the enolase family. It depends on Mg(2+) as a cofactor.

The protein localises to the cytoplasm. The protein resides in the secreted. It localises to the cell surface. It carries out the reaction (2R)-2-phosphoglycerate = phosphoenolpyruvate + H2O. It functions in the pathway carbohydrate degradation; glycolysis; pyruvate from D-glyceraldehyde 3-phosphate: step 4/5. In terms of biological role, catalyzes the reversible conversion of 2-phosphoglycerate (2-PG) into phosphoenolpyruvate (PEP). It is essential for the degradation of carbohydrates via glycolysis. This chain is Enolase, found in Exiguobacterium sibiricum (strain DSM 17290 / CCUG 55495 / CIP 109462 / JCM 13490 / 255-15).